Here is a 469-residue protein sequence, read N- to C-terminus: Probable Xaa-Pro aminopeptidase PEPP (469 aa).

Mn(2+) is bound by residues D265, D276, E399, and E439.

It belongs to the peptidase M24B family. It depends on Mn(2+) as a cofactor.

It catalyses the reaction Release of any N-terminal amino acid, including proline, that is linked to proline, even from a dipeptide or tripeptide.. Catalyzes the removal of a penultimate prolyl residue from the N-termini of peptides. The sequence is that of Probable Xaa-Pro aminopeptidase PEPP (PEPP) from Coccidioides posadasii (strain C735) (Valley fever fungus).